A 115-amino-acid polypeptide reads, in one-letter code: T cell receptor beta variable 7-8 (115 aa).

Positions 1-21 (MGTRLLCWVVLGFLGTDHTGA) are cleaved as a signal peptide. Positions 22-115 (GVSQSPRYKV…SAVYLCASSL (94 aa)) constitute an Ig-like domain. A disulfide bridge links Cys-42 with Cys-111.

Alpha-beta TR is a heterodimer composed of an alpha and beta chain; disulfide-linked. The alpha-beta TR is associated with the transmembrane signaling CD3 coreceptor proteins to form the TR-CD3 (TcR or TCR). The assembly of alpha-beta TR heterodimers with CD3 occurs in the endoplasmic reticulum where a single alpha-beta TR heterodimer associates with one CD3D-CD3E heterodimer, one CD3G-CD3E heterodimer and one CD247 homodimer forming a stable octameric structure. CD3D-CD3E and CD3G-CD3E heterodimers preferentially associate with TR alpha and TR beta chains, respectively. The association of the CD247 homodimer is the last step of TcR assembly in the endoplasmic reticulum and is required for transport to the cell surface.

Its subcellular location is the cell membrane. Functionally, v region of the variable domain of T cell receptor (TR) beta chain that participates in the antigen recognition. Alpha-beta T cell receptors are antigen specific receptors which are essential to the immune response and are present on the cell surface of T lymphocytes. Recognize peptide-major histocompatibility (MH) (pMH) complexes that are displayed by antigen presenting cells (APC), a prerequisite for efficient T cell adaptive immunity against pathogens. Binding of alpha-beta TR to pMH complex initiates TR-CD3 clustering on the cell surface and intracellular activation of LCK that phosphorylates the ITAM motifs of CD3G, CD3D, CD3E and CD247 enabling the recruitment of ZAP70. In turn ZAP70 phosphorylates LAT, which recruits numerous signaling molecules to form the LAT signalosome. The LAT signalosome propagates signal branching to three major signaling pathways, the calcium, the mitogen-activated protein kinase (MAPK) kinase and the nuclear factor NF-kappa-B (NF-kB) pathways, leading to the mobilization of transcription factors that are critical for gene expression and essential for T cell growth and differentiation. The T cell repertoire is generated in the thymus, by V-(D)-J rearrangement. This repertoire is then shaped by intrathymic selection events to generate a peripheral T cell pool of self-MH restricted, non-autoaggressive T cells. Post-thymic interaction of alpha-beta TR with the pMH complexes shapes TR structural and functional avidity. The sequence is that of T cell receptor beta variable 7-8 from Homo sapiens (Human).